The following is an 82-amino-acid chain: Sulfur carrier protein TusA (82 aa).

Catalysis depends on C19, which acts as the Cysteine persulfide intermediate.

The protein belongs to the sulfur carrier protein TusA family.

The protein localises to the cytoplasm. In terms of biological role, sulfur carrier protein which probably makes part of a sulfur-relay system. This chain is Sulfur carrier protein TusA, found in Vibrio cholerae serotype O1 (strain ATCC 39541 / Classical Ogawa 395 / O395).